Here is a 217-residue protein sequence, read N- to C-terminus: Pro-Pro endopeptidase (217 aa).

The first 27 residues, 1 to 27 (MKWDKRVVALILAVMIVCPLFAAPAHA), serve as a signal peptide directing secretion. Residues 30-216 (QSILDKLVVL…TYEFMAKLFA (187 aa)) enclose the ATLF-like domain. Positions 112–115 (SERV) are plays a crucial role in substrate specificity. His137 serves as a coordination point for Zn(2+). Residue Glu138 is the Proton acceptor of the active site. Zn(2+)-binding residues include His141, Tyr174, and Glu181.

It belongs to the peptidase M34 family. Pro-Pro endopeptidase subfamily. As to quaternary structure, monomer. It depends on Zn(2+) as a cofactor.

It localises to the secreted. The enzyme catalyses The enzyme catalyzes the hydrolytic cleavage of peptide bonds between two proline residues.. Zinc-dependent endoprotease with a unique preference for proline residues surrounding the scissile bond, which cleaves in a PLP-|-PVP motif. Cleaves the cell surface protein encoded by an adjacent gene, which contains two PPEP-2 cleaving sites and putative extracellular matrix-binding domains. Thereby, may have a role in the regulation of P.alvei adhesion. Is not able to cleave within the PVP-|-PVQ motif, and only shows a very poor cleavage of the VNP-|-PVP motif in vitro, which is the optimal substrate peptide for PPEP-1 from P.difficile. This Paenibacillus alvei (strain ATCC 6344 / DSM 29 / NBRC 3343 / NCIMB 9371 / NCTC 6352) (Bacillus alvei) protein is Pro-Pro endopeptidase.